Consider the following 282-residue polypeptide: uncharacterized protein (282 aa).

Disordered regions lie at residues 1–45 (MPLE…EEDE) and 201–259 (DRRR…KPWG). Positions 10-19 (SEMKEFKEST) are enriched in basic and acidic residues. Over residues 26 to 38 (SVSSEETLTQSMV) the composition is skewed to polar residues. The segment covering 201 to 237 (DRRRKEDSKARSRLTRREEHSEHHRSGKSRRERERRS) has biased composition (basic and acidic residues).

This is an uncharacterized protein from Ostreid herpesvirus 1 (isolate France) (OsHV-1).